Consider the following 151-residue polypeptide: Small ribosomal subunit protein uS15 (151 aa).

The protein belongs to the universal ribosomal protein uS15 family.

The chain is Small ribosomal subunit protein uS15 (RPS13) from Wuchereria bancrofti.